Here is a 259-residue protein sequence, read N- to C-terminus: Bis(5'-nucleosyl)-tetraphosphatase, symmetrical (259 aa).

This sequence belongs to the Ap4A hydrolase family.

The catalysed reaction is P(1),P(4)-bis(5'-adenosyl) tetraphosphate + H2O = 2 ADP + 2 H(+). Functionally, hydrolyzes diadenosine 5',5'''-P1,P4-tetraphosphate to yield ADP. The polypeptide is Bis(5'-nucleosyl)-tetraphosphatase, symmetrical (apaH) (Klebsiella aerogenes (Enterobacter aerogenes)).